We begin with the raw amino-acid sequence, 159 residues long: Growth arrest and DNA damage-inducible protein GADD45 gamma (159 aa).

A homodimerization region spans residues 43-86 (VYESAKVLNVDPDNVTFCVLAADEEDEGDIALQIHFTLIQAFCC).

This sequence belongs to the GADD45 family. As to quaternary structure, undergoes concentration-dependent homodimerization, which is required for growth inhibititory activity and enhances interaction with PCNA. Interacts with GADD45GIP1. Interacts with PCNA.

Functionally, involved in the regulation of growth and apoptosis. Mediates activation of stress-responsive MTK1/MEKK4 MAPKKK. The protein is Growth arrest and DNA damage-inducible protein GADD45 gamma (GADD45G) of Bos taurus (Bovine).